The sequence spans 140 residues: Nucleoside diphosphate kinase (140 aa).

Residues Lys-11, Phe-59, Arg-87, Thr-93, Arg-104, and Asn-114 each coordinate ATP. His-117 (pros-phosphohistidine intermediate) is an active-site residue.

The protein belongs to the NDK family. As to quaternary structure, homotetramer. The cofactor is Mg(2+).

Its subcellular location is the cytoplasm. The catalysed reaction is a 2'-deoxyribonucleoside 5'-diphosphate + ATP = a 2'-deoxyribonucleoside 5'-triphosphate + ADP. It catalyses the reaction a ribonucleoside 5'-diphosphate + ATP = a ribonucleoside 5'-triphosphate + ADP. Major role in the synthesis of nucleoside triphosphates other than ATP. The ATP gamma phosphate is transferred to the NDP beta phosphate via a ping-pong mechanism, using a phosphorylated active-site intermediate. In Acidiphilium cryptum (strain JF-5), this protein is Nucleoside diphosphate kinase.